A 91-amino-acid chain; its full sequence is Uteroglobin (91 aa).

The first 21 residues, Met-1–Ala-21, serve as a signal peptide directing secretion.

The protein belongs to the secretoglobin family. In terms of assembly, antiparallel homodimer; disulfide-linked. Interaction with LMBR1L is controversial. Club cells (nonciliated cells of the surface epithelium of the pulmonary airways). Expressed in lung, uterus, and prostate.

The protein localises to the secreted. Its function is as follows. Binds phosphatidylcholine, phosphatidylinositol, polychlorinated biphenyls (PCB) and weakly progesterone, potent inhibitor of phospholipase A2. The chain is Uteroglobin (SCGB1A1) from Equus caballus (Horse).